We begin with the raw amino-acid sequence, 213 residues long: mRNA-decapping protein OPG121 (213 aa).

N(7)-methyl-GTP contacts are provided by Glu-16 and Arg-50. One can recognise a Nudix hydrolase domain in the interval 30-209 (KDTHVFAACI…EYLSYIYNML (180 aa)). The Nudix box motif lies at 111–132 (GKLDKKESIKDCLRRELKEESD). The active-site Nucleophile is Glu-126. Mg(2+) is bound by residues Glu-126 and Glu-130. Asp-151 contacts N(7)-methyl-GTP. Glu-183 lines the Mg(2+) pocket.

Belongs to the Nudix hydrolase family. Mg(2+) serves as cofactor. It depends on Mn(2+) as a cofactor.

It catalyses the reaction a 5'-end (N(7)-methyl 5'-triphosphoguanosine)-guanosine in mRNA + H2O = a 5'-end phospho-guanosine in mRNA + N(7)-methyl-GDP + 2 H(+). Decapping enzyme that remove the protective 5'-cap from both host and viral mRNAs to commit transcripts for decay by the cellular exonuclease XRN1. Accelerates viral and cellular mRNA turnover to eliminate competing host mRNAs and allow stage-specific synthesis of viral proteins. Acceleration of the turnover of cellular transcripts may even promote the shutoff of host protein synthesis. This is mRNA-decapping protein OPG121 (OPG121) from Vaccinia virus (strain Western Reserve) (VACV).